Consider the following 597-residue polypeptide: Aspartate--tRNA(Asp/Asn) ligase (597 aa).

An L-aspartate-binding site is contributed by Glu-172. The interval 196-199 (QLFK) is aspartate. Position 218 (Arg-218) interacts with L-aspartate. ATP-binding positions include 218-220 (RDE) and Gln-227. Residue His-454 participates in L-aspartate binding. Glu-488 provides a ligand contact to ATP. Arg-495 serves as a coordination point for L-aspartate. 540 to 543 (GLDR) contacts ATP.

Belongs to the class-II aminoacyl-tRNA synthetase family. Type 1 subfamily. In terms of assembly, homodimer.

Its subcellular location is the cytoplasm. It carries out the reaction tRNA(Asx) + L-aspartate + ATP = L-aspartyl-tRNA(Asx) + AMP + diphosphate. Its function is as follows. Aspartyl-tRNA synthetase with relaxed tRNA specificity since it is able to aspartylate not only its cognate tRNA(Asp) but also tRNA(Asn). Reaction proceeds in two steps: L-aspartate is first activated by ATP to form Asp-AMP and then transferred to the acceptor end of tRNA(Asp/Asn). This Chromobacterium violaceum (strain ATCC 12472 / DSM 30191 / JCM 1249 / CCUG 213 / NBRC 12614 / NCIMB 9131 / NCTC 9757 / MK) protein is Aspartate--tRNA(Asp/Asn) ligase.